A 341-amino-acid chain; its full sequence is S-adenosylmethionine:tRNA ribosyltransferase-isomerase (341 aa).

The protein belongs to the QueA family. As to quaternary structure, monomer.

The protein resides in the cytoplasm. The enzyme catalyses 7-aminomethyl-7-carbaguanosine(34) in tRNA + S-adenosyl-L-methionine = epoxyqueuosine(34) in tRNA + adenine + L-methionine + 2 H(+). It functions in the pathway tRNA modification; tRNA-queuosine biosynthesis. Its function is as follows. Transfers and isomerizes the ribose moiety from AdoMet to the 7-aminomethyl group of 7-deazaguanine (preQ1-tRNA) to give epoxyqueuosine (oQ-tRNA). The chain is S-adenosylmethionine:tRNA ribosyltransferase-isomerase from Desulforamulus reducens (strain ATCC BAA-1160 / DSM 100696 / MI-1) (Desulfotomaculum reducens).